Reading from the N-terminus, the 489-residue chain is Palmitoyltransferase ZDHHC14 (489 aa).

Topologically, residues 1 to 60 (MPPGGGGPMKDCEYSQISTHSSSPMESPHKKKKIAARRKWEVFPGRNKFFCNGRIMMARQ) are cytoplasmic. A helical transmembrane segment spans residues 61 to 81 (TGVFYLTLILILVTSGLFFAF). The Lumenal segment spans residues 82–89 (DCRYLAEK). The chain crosses the membrane as a helical span at residues 90-110 (ITPAIPVVGGILFFFVMGTLL). Residues 111-208 (RTSFSDPGVL…GNCVGKRNYR (98 aa)) lie on the Cytoplasmic side of the membrane. Residues 165–215 (KYCFTCKIFRPPRASHCSLCDNCVEQFDHHCPWVGNCVGKRNYRFFYMFIL) form the DHHC domain. Cys195 serves as the catalytic S-palmitoyl cysteine intermediate. The chain crosses the membrane as a helical span at residues 209-229 (FFYMFILSLSFLTVFIFAFVI). Over 230-255 (THVIHRSQQKGFLDALKDSPASVLEA) the chain is Lumenal. Residues 256-276 (VICFFSVWSIIGLSGFHTYLI) form a helical membrane-spanning segment. The Cytoplasmic portion of the chain corresponds to 277–489 (SSNQTTNEDI…VRGLVKLSSV (213 aa)). The segment at 434 to 454 (HGGHQFLTPDEAPSPPRMLGA) is disordered. Phosphoserine is present on Ser456.

This sequence belongs to the DHHC palmitoyltransferase family. ERF2/ZDHHC9 subfamily.

It localises to the endoplasmic reticulum membrane. It is found in the golgi apparatus membrane. It carries out the reaction L-cysteinyl-[protein] + hexadecanoyl-CoA = S-hexadecanoyl-L-cysteinyl-[protein] + CoA. Functionally, palmitoyltransferase that could catalyze the addition of palmitate onto various protein substrates. May have a palmitoyltransferase activity toward the beta-2 adrenergic receptor/ADRB2 and thereby regulate G protein-coupled receptor signaling. May play a role in cell differentiation and apoptosis. The sequence is that of Palmitoyltransferase ZDHHC14 from Mus musculus (Mouse).